The primary structure comprises 490 residues: UDP-glycosyltransferase 84A1 (490 aa).

H30 serves as the catalytic Proton acceptor. H30 contacts an anthocyanidin. Positions 358, 373, 376, 377, 378, and 381 each coordinate UDP-alpha-D-glucose. An anthocyanidin is bound at residue G396. 2 residues coordinate UDP-alpha-D-glucose: D397 and Q398.

Belongs to the UDP-glycosyltransferase family. In terms of tissue distribution, expressed in roots, flowers and siliques.

The enzyme catalyses (E)-4-coumarate + UDP-alpha-D-glucose = 4-O-(beta-D-glucosyl)-trans-4-coumarate + UDP + H(+). The catalysed reaction is (E)-ferulate + UDP-alpha-D-glucose = 1-O-[(E)-feruloyl]-beta-D-glucose + UDP. It carries out the reaction (E)-caffeate + UDP-alpha-D-glucose = 1-O-[(E)-caffeoyl]-beta-D-glucose + UDP. It catalyses the reaction (E)-sinapate + UDP-alpha-D-glucose = 1-O-(trans-sinapoyl)-beta-D-glucose + UDP. The enzyme catalyses (E)-cinnamate + UDP-alpha-D-glucose = 1-O-(trans-cinnamoyl)-beta-D-glucose + UDP. In terms of biological role, UDP-glucosyltransferase that forms glucose esters with phenylpropanoids. Glucosylates 4-coumarate, ferulate, caffeate, sinapate and cinnamate. Can glucosylate the phytotoxic xenobiotic compound 2,4,5-trichlorophenol (TCP). The protein is UDP-glycosyltransferase 84A1 of Arabidopsis thaliana (Mouse-ear cress).